Consider the following 365-residue polypeptide: Chorismate synthase (365 aa).

Arginine 46 is an NADP(+) binding site. Residues 123–125, 241–242, glycine 281, 296–300, and arginine 322 contribute to the FMN site; these read RSS, NG, and KPTPS.

This sequence belongs to the chorismate synthase family. In terms of assembly, homotetramer. FMNH2 serves as cofactor.

It catalyses the reaction 5-O-(1-carboxyvinyl)-3-phosphoshikimate = chorismate + phosphate. It functions in the pathway metabolic intermediate biosynthesis; chorismate biosynthesis; chorismate from D-erythrose 4-phosphate and phosphoenolpyruvate: step 7/7. Its function is as follows. Catalyzes the anti-1,4-elimination of the C-3 phosphate and the C-6 proR hydrogen from 5-enolpyruvylshikimate-3-phosphate (EPSP) to yield chorismate, which is the branch point compound that serves as the starting substrate for the three terminal pathways of aromatic amino acid biosynthesis. This reaction introduces a second double bond into the aromatic ring system. The chain is Chorismate synthase from Helicobacter pylori (strain ATCC 700392 / 26695) (Campylobacter pylori).